Consider the following 447-residue polypeptide: GTPase Der (447 aa).

EngA-type G domains lie at 4–165 (QIIT…PEEE) and 180–357 (LQIV…KIWN). Residues 10-17 (GRPNVGKS), 57-61 (DTPGL), 119-122 (NKCE), 186-193 (GRPNAGKS), 233-237 (DTAGL), and 298-301 (NKWD) contribute to the GTP site. A KH-like domain is found at 358–443 (KKITTSKLNE…PIRFTYVKTK (86 aa)).

Belongs to the TRAFAC class TrmE-Era-EngA-EngB-Septin-like GTPase superfamily. EngA (Der) GTPase family. In terms of assembly, associates with the 50S ribosomal subunit.

In terms of biological role, GTPase that plays an essential role in the late steps of ribosome biogenesis. This Rickettsia rickettsii (strain Iowa) protein is GTPase Der.